We begin with the raw amino-acid sequence, 281 residues long: NADPH-dependent 7-cyano-7-deazaguanine reductase (281 aa).

87 to 89 (IES) serves as a coordination point for substrate. 89 to 90 (SK) provides a ligand contact to NADPH. The active-site Thioimide intermediate is Cys-188. The active-site Proton donor is the Asp-195. Residue 227–228 (HE) participates in substrate binding. 256-257 (RG) serves as a coordination point for NADPH. The interval 261-281 (INPYRSTEQDKPAHNHRMARQ) is disordered.

The protein belongs to the GTP cyclohydrolase I family. QueF type 2 subfamily. Homodimer.

It is found in the cytoplasm. It carries out the reaction 7-aminomethyl-7-carbaguanine + 2 NADP(+) = 7-cyano-7-deazaguanine + 2 NADPH + 3 H(+). It functions in the pathway tRNA modification; tRNA-queuosine biosynthesis. Its function is as follows. Catalyzes the NADPH-dependent reduction of 7-cyano-7-deazaguanine (preQ0) to 7-aminomethyl-7-deazaguanine (preQ1). This is NADPH-dependent 7-cyano-7-deazaguanine reductase from Vibrio parahaemolyticus serotype O3:K6 (strain RIMD 2210633).